Consider the following 99-residue polypeptide: PE family protein PE13 (99 aa).

A PE domain is found at 1-93 (MSFVMAYPEM…ASSYAATEVA (93 aa)).

This sequence belongs to the mycobacterial PE family.

The protein resides in the secreted. It is found in the cell wall. Functionally, may play a pivotal role in the interaction between M.tuberculosis and host. Can enhance the survival within macrophages under stress conditions such as H(2)O(2), SDS and low pH. Increases the production of IL-6 and IL-1beta from macrophages, and decreases the secretion of suppressor of cytokine signaling 3 (SOCS-3). These changes probably involve the p38-ERK-NF-kappa-B signaling pathway. Also precipitates the macrophage death. The protein is PE family protein PE13 of Mycobacterium tuberculosis (strain ATCC 25618 / H37Rv).